A 236-amino-acid chain; its full sequence is Auxin-responsive protein IAA16 (236 aa).

The EAR-like (transcriptional repression) motif lies at 9 to 13 (LRLGL). The interval 82-110 (KNVMSGQKPTTGDATEGNDKTSGSSGATS) is disordered. The segment covering 85–94 (MSGQKPTTGD) has biased composition (polar residues). Residues 118 to 218 (VAYVKVSMDG…SCKRIRIMKG (101 aa)) form the PB1 domain.

This sequence belongs to the Aux/IAA family. As to quaternary structure, homodimers and heterodimers.

The protein localises to the nucleus. Aux/IAA proteins are short-lived transcriptional factors that function as repressors of early auxin response genes at low auxin concentrations. Repression is thought to result from the interaction with auxin response factors (ARFs), proteins that bind to the auxin-responsive promoter element (AuxRE). Formation of heterodimers with ARF proteins may alter their ability to modulate early auxin response genes expression. The protein is Auxin-responsive protein IAA16 (IAA16) of Arabidopsis thaliana (Mouse-ear cress).